A 224-amino-acid polypeptide reads, in one-letter code: MKPCAIVLLSGGLDSATALAMAREAGFACHALSLDYGQRHTAELAAAARLAAQLGAVEHRVIRLGLGDFGGSALTDASIAVPESPVAGIPVTYVPARNTVMLALALAWAEVLGARDIFIGVNAVDYSGYPDCRPEFIEAFERMANLATKAGVEGAQLRIHAPLQHLSKAEIIHRGTALGVDYAQTVSCYQADAEGRACGRCDACRLRREGFLAAGLADPTRYAR.

9–19 (LSGGLDSATAL) provides a ligand contact to ATP. Positions 188, 198, 201, and 204 each coordinate Zn(2+).

This sequence belongs to the QueC family. Requires Zn(2+) as cofactor.

The enzyme catalyses 7-carboxy-7-deazaguanine + NH4(+) + ATP = 7-cyano-7-deazaguanine + ADP + phosphate + H2O + H(+). It participates in purine metabolism; 7-cyano-7-deazaguanine biosynthesis. In terms of biological role, catalyzes the ATP-dependent conversion of 7-carboxy-7-deazaguanine (CDG) to 7-cyano-7-deazaguanine (preQ(0)). The polypeptide is 7-cyano-7-deazaguanine synthase (Thiobacillus denitrificans (strain ATCC 25259 / T1)).